We begin with the raw amino-acid sequence, 616 residues long: Homeodomain-interacting protein kinase 4 (616 aa).

A Protein kinase domain is found at 11–347; sequence YDIIEVLGKG…PSAALRHPFV (337 aa). Residues 17–25 and K40 contribute to the ATP site; that span reads LGKGTFGEV. The active-site Proton acceptor is D136. A disordered region spans residues 485 to 616; the sequence is RHKARKPPAG…SFLQHVTGHH (132 aa). Positions 496 to 511 are enriched in polar residues; sequence KSDSNLSNLIRLSQVS. A Phosphoserine modification is found at S511.

Belongs to the protein kinase superfamily. CMGC Ser/Thr protein kinase family. HIPK subfamily. Post-translationally, autophosphorylated.

The protein localises to the cytoplasm. It catalyses the reaction L-seryl-[protein] + ATP = O-phospho-L-seryl-[protein] + ADP + H(+). The catalysed reaction is L-threonyl-[protein] + ATP = O-phospho-L-threonyl-[protein] + ADP + H(+). In terms of biological role, protein kinase that phosphorylates TP53, and thus induces TP53 repression of BIRC5 promoter. May act as a corepressor of transcription factors (Potential). In Macaca fascicularis (Crab-eating macaque), this protein is Homeodomain-interacting protein kinase 4 (HIPK4).